Here is a 785-residue protein sequence, read N- to C-terminus: 5-methyltetrahydropteroyltriglutamate--homocysteine methyltransferase (785 aa).

Residues 15–18 (RELK) and K121 contribute to the 5-methyltetrahydropteroyltri-L-glutamate site. Residues 460–462 (IGS) and E513 each bind L-homocysteine. L-methionine is bound by residues 460-462 (IGS) and E513. 5-methyltetrahydropteroyltri-L-glutamate-binding positions include 544-545 (RC) and W590. Residue D628 coordinates L-homocysteine. Residue D628 coordinates L-methionine. E634 provides a ligand contact to 5-methyltetrahydropteroyltri-L-glutamate. The Zn(2+) site is built by H670, C672, and E694. Catalysis depends on H723, which acts as the Proton donor. A Zn(2+)-binding site is contributed by C755.

It belongs to the vitamin-B12 independent methionine synthase family. Requires Zn(2+) as cofactor.

The enzyme catalyses 5-methyltetrahydropteroyltri-L-glutamate + L-homocysteine = tetrahydropteroyltri-L-glutamate + L-methionine. It functions in the pathway amino-acid biosynthesis; L-methionine biosynthesis via de novo pathway; L-methionine from L-homocysteine (MetE route): step 1/1. In terms of biological role, catalyzes the transfer of a methyl group from 5-methyltetrahydrofolate to homocysteine resulting in methionine formation. This Nitratidesulfovibrio vulgaris (strain ATCC 29579 / DSM 644 / CCUG 34227 / NCIMB 8303 / VKM B-1760 / Hildenborough) (Desulfovibrio vulgaris) protein is 5-methyltetrahydropteroyltriglutamate--homocysteine methyltransferase.